A 234-amino-acid chain; its full sequence is Short neuropeptide F (234 aa).

The signal sequence occupies residues 1 to 22; that stretch reads MYRINLTTFTLLLVLAVGSLMS. A propeptide spanning residues 23–56 is cleaved from the precursor; sequence ESLHPSDGAINDLYEYLLQREYAAPVSYADHQIK. Residues Phe-69 and Phe-101 each carry the phenylalanine amide modification. Residue Trp-132 is modified to Tryptophan amide. Phe-165 carries the phenylalanine amide modification. Over residues 181 to 190 the composition is skewed to polar residues; it reads TTGQQAQPAN. The disordered stretch occupies residues 181-234; sequence TTGQQAQPANEASEKRAPTQRLRWGRSDPALAKDSSEDKALDVEESENTNADDK. Trp-204 carries the post-translational modification Tryptophan amide. Residues 207 to 234 constitute a propeptide that is removed on maturation; it reads SDPALAKDSSEDKALDVEESENTNADDK.

It belongs to the NPY family. In terms of tissue distribution, expressed in all body parts of larva, pupae and adults.

The protein resides in the secreted. Plays a role in controlling food intake and regulating body size. This Anopheles gambiae (African malaria mosquito) protein is Short neuropeptide F.